The sequence spans 161 residues: Disulfide bond formation protein B (161 aa).

Residues 1–8 (MQANSRAY) are Cytoplasmic-facing. A helical membrane pass occupies residues 9–25 (FLLIAFISFGLVGFALY). The Periplasmic segment spans residues 26–43 (LQFEKGYQPCPLCIMQRF). A disulfide bond links Cys-35 and Cys-38. The helical transmembrane segment at 44–58 (AFIGIGLFSLLAVIA) threads the bilayer. The Cytoplasmic segment spans residues 59-63 (QNTRS). Residues 64–81 (LWQGLGMLSGVGGIAVAV) traverse the membrane as a helical segment. The Periplasmic portion of the chain corresponds to 82-136 (YHVSLLLNPKASCGIDPLENWVNALPTAKVLPQVFYSDGLCTAPLPPVLGLSVPA). Cys-94 and Cys-122 form a disulfide bridge. The chain crosses the membrane as a helical span at residues 137–155 (WSLIWLFILTLTLAVGLIR). The Cytoplasmic segment spans residues 156 to 161 (REKNFR).

It belongs to the DsbB family.

Its subcellular location is the cell inner membrane. Functionally, required for disulfide bond formation in some periplasmic proteins. Acts by oxidizing the DsbA protein. The sequence is that of Disulfide bond formation protein B from Cupriavidus pinatubonensis (strain JMP 134 / LMG 1197) (Cupriavidus necator (strain JMP 134)).